We begin with the raw amino-acid sequence, 119 residues long: Protein Wnt-4 (119 aa).

Residue Ser-1 is the site of O-palmitoleoyl serine; by PORCN attachment. 2 disulfide bridges follow: Cys-69–Cys-100 and Cys-85–Cys-95. N-linked (GlcNAc...) asparagine glycosylation occurs at Asn-86.

It belongs to the Wnt family. In terms of processing, palmitoleoylation is required for efficient binding to frizzled receptors. Depalmitoleoylation leads to Wnt signaling pathway inhibition.

It localises to the secreted. Its subcellular location is the extracellular space. The protein localises to the extracellular matrix. Its function is as follows. Ligand for members of the frizzled family of seven transmembrane receptors. Plays an important role in embryonic development. In Plethodon jordani (Red-cheeked salamander), this protein is Protein Wnt-4 (WNT-4).